The primary structure comprises 468 residues: Ribulose bisphosphate carboxylase large chain (468 aa).

Lys5 is subject to N6,N6,N6-trimethyllysine. Asn114 and Thr164 together coordinate substrate. Lys166 acts as the Proton acceptor in catalysis. Residue Lys168 participates in substrate binding. Mg(2+) is bound by residues Lys192, Asp194, and Glu195. Lys192 is modified (N6-carboxylysine). His285 acts as the Proton acceptor in catalysis. Residues Arg286, His318, and Ser370 each coordinate substrate.

The protein belongs to the RuBisCO large chain family. Type I subfamily. Heterohexadecamer of 8 large chains and 8 small chains; disulfide-linked. The disulfide link is formed within the large subunit homodimers. Mg(2+) is required as a cofactor. Post-translationally, the disulfide bond which can form in the large chain dimeric partners within the hexadecamer appears to be associated with oxidative stress and protein turnover.

It localises to the plastid. It is found in the chloroplast. It carries out the reaction 2 (2R)-3-phosphoglycerate + 2 H(+) = D-ribulose 1,5-bisphosphate + CO2 + H2O. The enzyme catalyses D-ribulose 1,5-bisphosphate + O2 = 2-phosphoglycolate + (2R)-3-phosphoglycerate + 2 H(+). RuBisCO catalyzes two reactions: the carboxylation of D-ribulose 1,5-bisphosphate, the primary event in carbon dioxide fixation, as well as the oxidative fragmentation of the pentose substrate in the photorespiration process. Both reactions occur simultaneously and in competition at the same active site. This chain is Ribulose bisphosphate carboxylase large chain, found in Nolana spathulata (Chilean bell flower).